The sequence spans 554 residues: 2-succinyl-5-enolpyruvyl-6-hydroxy-3-cyclohexene-1-carboxylate synthase (554 aa).

The protein belongs to the TPP enzyme family. MenD subfamily. As to quaternary structure, homodimer. The cofactor is Mg(2+). Requires Mn(2+) as cofactor. Thiamine diphosphate is required as a cofactor.

The catalysed reaction is isochorismate + 2-oxoglutarate + H(+) = 5-enolpyruvoyl-6-hydroxy-2-succinyl-cyclohex-3-ene-1-carboxylate + CO2. The protein operates within quinol/quinone metabolism; 1,4-dihydroxy-2-naphthoate biosynthesis; 1,4-dihydroxy-2-naphthoate from chorismate: step 2/7. It participates in quinol/quinone metabolism; menaquinone biosynthesis. Functionally, catalyzes the thiamine diphosphate-dependent decarboxylation of 2-oxoglutarate and the subsequent addition of the resulting succinic semialdehyde-thiamine pyrophosphate anion to isochorismate to yield 2-succinyl-5-enolpyruvyl-6-hydroxy-3-cyclohexene-1-carboxylate (SEPHCHC). This Renibacterium salmoninarum (strain ATCC 33209 / DSM 20767 / JCM 11484 / NBRC 15589 / NCIMB 2235) protein is 2-succinyl-5-enolpyruvyl-6-hydroxy-3-cyclohexene-1-carboxylate synthase.